We begin with the raw amino-acid sequence, 82 residues long: Antitoxin MazE8 (82 aa).

Forms a complex with cognate toxin MazF8.

Functionally, antitoxin component of a type II toxin-antitoxin (TA) system. Its cognate toxin is MazF8. This chain is Antitoxin MazE8 (mazE8), found in Mycobacterium tuberculosis (strain ATCC 25618 / H37Rv).